The primary structure comprises 433 residues: GTPase Der (433 aa).

EngA-type G domains are found at residues 5–167 (KKVL…GEAN) and 174–349 (IKVG…DQLE). Residues 11 to 18 (GRPNVGKS), 58 to 62 (DTGGF), 119 to 122 (NKVD), 180 to 187 (GKPNSGKS), 227 to 231 (DTAGI), and 292 to 295 (SKWD) contribute to the GTP site. A KH-like domain is found at 350 to 429 (FKTSTPDLNK…PILVELREKI (80 aa)).

This sequence belongs to the TRAFAC class TrmE-Era-EngA-EngB-Septin-like GTPase superfamily. EngA (Der) GTPase family. In terms of assembly, associates with the 50S ribosomal subunit.

GTPase that plays an essential role in the late steps of ribosome biogenesis. The chain is GTPase Der from Borreliella afzelii (strain PKo) (Borrelia afzelii).